The following is an 817-amino-acid chain: Leucine--tRNA ligase (817 aa).

The 'HIGH' region motif lies at 42 to 52 (PYPSGRLHMGH). The short motif at 576-580 (KMSKS) is the 'KMSKS' region element. Lys-579 contacts ATP.

The protein belongs to the class-I aminoacyl-tRNA synthetase family.

It is found in the cytoplasm. The enzyme catalyses tRNA(Leu) + L-leucine + ATP = L-leucyl-tRNA(Leu) + AMP + diphosphate. The polypeptide is Leucine--tRNA ligase (Thioalkalivibrio sulfidiphilus (strain HL-EbGR7)).